A 70-amino-acid polypeptide reads, in one-letter code: NAD(P)H-quinone oxidoreductase subunit O (70 aa).

This sequence belongs to the complex I NdhO subunit family. In terms of assembly, NDH-1 can be composed of about 15 different subunits; different subcomplexes with different compositions have been identified which probably have different functions.

It localises to the cellular thylakoid membrane. The enzyme catalyses a plastoquinone + NADH + (n+1) H(+)(in) = a plastoquinol + NAD(+) + n H(+)(out). It catalyses the reaction a plastoquinone + NADPH + (n+1) H(+)(in) = a plastoquinol + NADP(+) + n H(+)(out). NDH-1 shuttles electrons from an unknown electron donor, via FMN and iron-sulfur (Fe-S) centers, to quinones in the respiratory and/or the photosynthetic chain. The immediate electron acceptor for the enzyme in this species is believed to be plastoquinone. Couples the redox reaction to proton translocation, and thus conserves the redox energy in a proton gradient. Cyanobacterial NDH-1 also plays a role in inorganic carbon-concentration. The chain is NAD(P)H-quinone oxidoreductase subunit O from Nostoc sp. (strain PCC 7120 / SAG 25.82 / UTEX 2576).